Consider the following 148-residue polypeptide: NADPH-dependent 7-cyano-7-deazaguanine reductase (148 aa).

The active-site Thioimide intermediate is Cys50. The active-site Proton donor is Asp57. Substrate-binding positions include 72-74 (VES) and 91-92 (HE).

The protein belongs to the GTP cyclohydrolase I family. QueF type 1 subfamily.

It is found in the cytoplasm. The catalysed reaction is 7-aminomethyl-7-carbaguanine + 2 NADP(+) = 7-cyano-7-deazaguanine + 2 NADPH + 3 H(+). It functions in the pathway tRNA modification; tRNA-queuosine biosynthesis. In terms of biological role, catalyzes the NADPH-dependent reduction of 7-cyano-7-deazaguanine (preQ0) to 7-aminomethyl-7-deazaguanine (preQ1). This is NADPH-dependent 7-cyano-7-deazaguanine reductase from Helicobacter acinonychis (strain Sheeba).